The following is an 85-amino-acid chain: Protein MC005 (85 aa).

In terms of assembly, interacts with host IKBKG; this interaction prevents NF-kappa-B activation.

The protein resides in the host cytoplasm. Functionally, plays a role in the inhibition of the host NF-kappa-B pathway by preventing ubiquitin binding-dependent regulation of host IKBKB activation by IKBKG/NEMO. The chain is Protein MC005 (MC005L) from Molluscum contagiosum virus subtype 1 (MOCV).